We begin with the raw amino-acid sequence, 617 residues long: D-glucuronyl C5-epimerase (617 aa).

Residues 1–11 (MRCLAARVNYK) are Cytoplasmic-facing. A helical; Signal-anchor for type II membrane protein transmembrane segment spans residues 12–28 (TLIIICALFTLVTVLLW). Over 29-617 (NKCSSDKAIQ…YLKGSRAKHN (589 aa)) the chain is Lumenal. Residues Y179, 184–186 (RDR), Q201, Y209, Q212, and Q215 contribute to the substrate site. Positions 237, 239, 268, 269, and 392 each coordinate Ca(2+). Substrate is bound by residues 429-432 (KLGE), 499-500 (EY), N510, Y514, Y560, R563, and 572-581 (NLARWDYHTT).

The protein belongs to the D-glucuronyl C5-epimerase family. In terms of assembly, homodimer. Interacts with HS2ST1.

It is found in the golgi apparatus membrane. It carries out the reaction [heparosan-N-sulfate](n) = [heparan-N-sulfate](n). Its pathway is glycan metabolism; heparan sulfate biosynthesis. The protein operates within glycan metabolism; heparin biosynthesis. In terms of biological role, converts D-glucuronic acid residues adjacent to N-sulfate sugar residues to L-iduronic acid residues, both in maturing heparan sulfate (HS) and heparin chains. This is important for further modifications that determine the specificity of interactions between these glycosaminoglycans and proteins. This Bos taurus (Bovine) protein is D-glucuronyl C5-epimerase (GLCE).